The chain runs to 245 residues: tRNA (guanine-N(7)-)-methyltransferase (245 aa).

S-adenosyl-L-methionine contacts are provided by residues glycine 70, glutamate 93–isoleucine 94, asparagine 126–alanine 127, and leucine 146. Aspartate 149 is an active-site residue. Residue serine 224–glutamate 226 coordinates S-adenosyl-L-methionine.

Belongs to the class I-like SAM-binding methyltransferase superfamily. TrmB family.

It localises to the nucleus. It carries out the reaction guanosine(46) in tRNA + S-adenosyl-L-methionine = N(7)-methylguanosine(46) in tRNA + S-adenosyl-L-homocysteine. The protein operates within tRNA modification; N(7)-methylguanine-tRNA biosynthesis. In terms of biological role, catalyzes the formation of N(7)-methylguanine at position 46 (m7G46) in tRNA. The polypeptide is tRNA (guanine-N(7)-)-methyltransferase (Aedes aegypti (Yellowfever mosquito)).